The following is a 180-amino-acid chain: ATP-dependent protease subunit HslV (180 aa).

Thr10 is an active-site residue. Residues Gly165, Cys168, and Thr171 each coordinate Na(+).

This sequence belongs to the peptidase T1B family. HslV subfamily. In terms of assembly, a double ring-shaped homohexamer of HslV is capped on each side by a ring-shaped HslU homohexamer. The assembly of the HslU/HslV complex is dependent on binding of ATP.

The protein localises to the cytoplasm. It catalyses the reaction ATP-dependent cleavage of peptide bonds with broad specificity.. Allosterically activated by HslU binding. Its function is as follows. Protease subunit of a proteasome-like degradation complex believed to be a general protein degrading machinery. In Koribacter versatilis (strain Ellin345), this protein is ATP-dependent protease subunit HslV.